A 504-amino-acid polypeptide reads, in one-letter code: uncharacterized protein (504 aa).

Residues 36-60 (TAFRMEKEQRLPSQNKPPRGRRRPD) are disordered. Positions 125–309 (QTHEPGRLGL…RPHLQVLPER (185 aa)) constitute an Integrase catalytic domain.

This is an uncharacterized protein from Sinorhizobium fredii (strain NBRC 101917 / NGR234).